A 594-amino-acid chain; its full sequence is Transcriptional repressor p66-beta (594 aa).

At serine 17 the chain carries Phosphoserine. Glycyl lysine isopeptide (Lys-Gly) (interchain with G-Cter in SUMO2) cross-links involve residues lysine 33 and lysine 66. The segment at 62–143 is disordered; the sequence is ELPTKQDGSG…ASSPRSSSRM (82 aa). Residues 74 to 89 are compositionally biased toward basic and acidic residues; it reads GYEEKLNGNLRPHGDN. Lysine 98 participates in a covalent cross-link: Glycyl lysine isopeptide (Lys-Gly) (interchain with G-Cter in SUMO2). Positions 109 to 119 are enriched in basic and acidic residues; the sequence is SARRSEPDRGR. Threonine 121 is modified (phosphothreonine). Phosphoserine is present on residues serine 123, serine 130, serine 135, and serine 136. Over residues 130 to 140 the composition is skewed to low complexity; that stretch reads SDNEASSPRSS. Positions 141–195 form a coiled coil; sequence SRMEERLKAANLEMFKGKGMEERQQLIKQLRDELRLEEARLVLLKKLRQSQLQKE. Lysine 148 is covalently cross-linked (Glycyl lysine isopeptide (Lys-Gly) (interchain with G-Cter in SUMO2)). The interval 166–191 is CR1; interaction with MBD2 and MBD3; sequence LIKQLRDELRLEEARLVLLKKLRQSQ. Lysine 200 participates in a covalent cross-link: Glycyl lysine isopeptide (Lys-Gly) (interchain with G-Cter in SUMO2). Position 209 is a phosphoserine (serine 209). The segment at 214 to 237 is disordered; that stretch reads SPAHVGQQGLSKLPSRPGAQGIEP. Lysine 282 participates in a covalent cross-link: Glycyl lysine isopeptide (Lys-Gly) (interchain with G-Cter in SUMO2). Residues serine 334, serine 339, and serine 341 each carry the phosphoserine modification. Residues 341–481 form a CR2; histone tail-binding region; that stretch reads SAMSDAANSQ…QEQEIEQRLQ (141 aa). Glycyl lysine isopeptide (Lys-Gly) (interchain with G-Cter in SUMO2) cross-links involve residues lysine 354, lysine 455, and lysine 468. The GATA-type zinc finger occupies 415–468; the sequence is RVEPFVCAQCRTDFTPHWKQEKNGKILCEQCMTSNQKKALKAEHTNRLKNAFVK. Residues 450 to 483 are a coiled coil; the sequence is QKKALKAEHTNRLKNAFVKALQQEQEIEQRLQQQ. At serine 487 the chain carries Phosphoserine. A Glycyl lysine isopeptide (Lys-Gly) (interchain with G-Cter in SUMO2) cross-link involves residue lysine 499.

In terms of assembly, homooligomer. Component of the nucleosome remodeling and deacetylase (NuRD) repressor complex, composed of core proteins MTA1, MTA2, MTA3, RBBP4, RBBP7, HDAC1, HDAC2, MBD2, MBD3, and peripherally associated proteins CDK2AP1, CDK2AP2, GATAD2A, GATAD2B, CHD3, CHD4 and CHD5. The exact stoichiometry of the NuRD complex is unknown, and some subunits such as MBD2 and MBD3, GATAD2A and GATAD2B, and CHD3, CHD4 and CHD5 define mutually exclusive NuRD complexes. Interacts with MBD2; this is required for the enhancement of MBD2-mediated repression and for targeting to the chromatin. Interacts with MBD3. Component of the MeCP1 histone deacetylase complex. Interacts with histone tails, including that of histones H2A, H2B, H3 and H4. Interacts with ERCC6.

It is found in the nucleus speckle. The protein resides in the nucleus. Its subcellular location is the chromosome. Its function is as follows. Transcriptional repressor. Acts as a component of the histone deacetylase NuRD complex which participates in the remodeling of chromatin. Enhances MBD2-mediated repression. Efficient repression requires the presence of GATAD2A. Targets MBD3 to discrete loci in the nucleus. May play a role in synapse development. In Mus musculus (Mouse), this protein is Transcriptional repressor p66-beta (Gatad2b).